Reading from the N-terminus, the 299-residue chain is Methionyl-tRNA formyltransferase (299 aa).

109 to 112 is a binding site for (6S)-5,6,7,8-tetrahydrofolate; it reads SLLP.

Belongs to the Fmt family.

It catalyses the reaction L-methionyl-tRNA(fMet) + (6R)-10-formyltetrahydrofolate = N-formyl-L-methionyl-tRNA(fMet) + (6S)-5,6,7,8-tetrahydrofolate + H(+). Functionally, attaches a formyl group to the free amino group of methionyl-tRNA(fMet). The formyl group appears to play a dual role in the initiator identity of N-formylmethionyl-tRNA by promoting its recognition by IF2 and preventing the misappropriation of this tRNA by the elongation apparatus. This is Methionyl-tRNA formyltransferase from Wolbachia sp. subsp. Drosophila simulans (strain wRi).